Reading from the N-terminus, the 388-residue chain is Cytochrome b (388 aa).

4 helical membrane-spanning segments follow: residues 38–58 (FGCLAGICLVIQIVTGVFLAM), 82–104 (WLLRYMHANGASMFLIVVHLHIF), 119–139 (VWCLGVVIFLLMIVTAFIGYV), and 185–205 (FFSLHHLLPLILAGASLLHLA). Residues H88 and H102 each coordinate heme b. Residues H189 and H203 each contribute to the heme b site. Residue H208 coordinates a ubiquinone. The next 4 membrane-spanning stretches (helical) occupy residues 231 to 251 (FYVKDLVGRVASAIFFSIWIF), 295 to 315 (AGGVAAIAPVFISLLALPFFK), 327 to 347 (IHQGIFWLLLADCLLLGWIGC), and 354 to 373 (FVTIGQISSFFFFLFFAITP).

The protein belongs to the cytochrome b family. As to quaternary structure, the main subunits of complex b-c1 are: cytochrome b, cytochrome c1 and the Rieske protein. The cofactor is heme b.

It localises to the mitochondrion inner membrane. Component of the ubiquinol-cytochrome c reductase complex (complex III or cytochrome b-c1 complex) that is part of the mitochondrial respiratory chain. The b-c1 complex mediates electron transfer from ubiquinol to cytochrome c. Contributes to the generation of a proton gradient across the mitochondrial membrane that is then used for ATP synthesis. In Zea mays (Maize), this protein is Cytochrome b (MT-CYB).